The sequence spans 283 residues: Elongation factor Ts (283 aa).

The interval 80-83 (TDFV) is involved in Mg(2+) ion dislocation from EF-Tu.

Belongs to the EF-Ts family.

Its subcellular location is the cytoplasm. Its function is as follows. Associates with the EF-Tu.GDP complex and induces the exchange of GDP to GTP. It remains bound to the aminoacyl-tRNA.EF-Tu.GTP complex up to the GTP hydrolysis stage on the ribosome. This chain is Elongation factor Ts, found in Citrobacter koseri (strain ATCC BAA-895 / CDC 4225-83 / SGSC4696).